The chain runs to 358 residues: Chorismate synthase (358 aa).

Position 47 (Arg47) interacts with NADP(+). FMN is bound by residues 124–126, 240–241, Gly284, 299–303, and Arg325; these read RSS, NA, and KPVAT.

Belongs to the chorismate synthase family. Homotetramer. FMNH2 serves as cofactor.

The enzyme catalyses 5-O-(1-carboxyvinyl)-3-phosphoshikimate = chorismate + phosphate. The protein operates within metabolic intermediate biosynthesis; chorismate biosynthesis; chorismate from D-erythrose 4-phosphate and phosphoenolpyruvate: step 7/7. In terms of biological role, catalyzes the anti-1,4-elimination of the C-3 phosphate and the C-6 proR hydrogen from 5-enolpyruvylshikimate-3-phosphate (EPSP) to yield chorismate, which is the branch point compound that serves as the starting substrate for the three terminal pathways of aromatic amino acid biosynthesis. This reaction introduces a second double bond into the aromatic ring system. The sequence is that of Chorismate synthase from Phocaeicola vulgatus (strain ATCC 8482 / DSM 1447 / JCM 5826 / CCUG 4940 / NBRC 14291 / NCTC 11154) (Bacteroides vulgatus).